Consider the following 416-residue polypeptide: Serine hydroxymethyltransferase (416 aa).

(6S)-5,6,7,8-tetrahydrofolate-binding positions include Leu-118 and 122 to 124 (GHL). Position 226 is an N6-(pyridoxal phosphate)lysine (Lys-226). Residues Glu-242 and 350-352 (SPF) contribute to the (6S)-5,6,7,8-tetrahydrofolate site.

Belongs to the SHMT family. In terms of assembly, homodimer. Requires pyridoxal 5'-phosphate as cofactor.

The protein resides in the cytoplasm. It catalyses the reaction (6R)-5,10-methylene-5,6,7,8-tetrahydrofolate + glycine + H2O = (6S)-5,6,7,8-tetrahydrofolate + L-serine. The protein operates within one-carbon metabolism; tetrahydrofolate interconversion. It participates in amino-acid biosynthesis; glycine biosynthesis; glycine from L-serine: step 1/1. Its function is as follows. Catalyzes the reversible interconversion of serine and glycine with tetrahydrofolate (THF) serving as the one-carbon carrier. This reaction serves as the major source of one-carbon groups required for the biosynthesis of purines, thymidylate, methionine, and other important biomolecules. Also exhibits THF-independent aldolase activity toward beta-hydroxyamino acids, producing glycine and aldehydes, via a retro-aldol mechanism. In Helicobacter pylori (strain G27), this protein is Serine hydroxymethyltransferase.